Reading from the N-terminus, the 620-residue chain is Putative ribonuclease H protein At1g65750 (620 aa).

An RNase H type-1 domain is found at 456 to 586; sequence CVGWVKVNTD…ADGLANYAFS (131 aa). Mg(2+) is bound by residues aspartate 465, glutamate 505, aspartate 529, and aspartate 578.

The cofactor is Mg(2+).

The catalysed reaction is Endonucleolytic cleavage to 5'-phosphomonoester.. The protein is Putative ribonuclease H protein At1g65750 of Arabidopsis thaliana (Mouse-ear cress).